Reading from the N-terminus, the 359-residue chain is Nicotinate-nucleotide--dimethylbenzimidazole phosphoribosyltransferase (359 aa).

The active-site Proton acceptor is the glutamate 318.

The protein belongs to the CobT family. Homodimer.

It catalyses the reaction 5,6-dimethylbenzimidazole + nicotinate beta-D-ribonucleotide = alpha-ribazole 5'-phosphate + nicotinate + H(+). It functions in the pathway nucleoside biosynthesis; alpha-ribazole biosynthesis; alpha-ribazole from 5,6-dimethylbenzimidazole: step 1/2. Functionally, catalyzes the synthesis of alpha-ribazole-5'-phosphate from nicotinate mononucleotide (NAMN) and 5,6-dimethylbenzimidazole (DMB). This chain is Nicotinate-nucleotide--dimethylbenzimidazole phosphoribosyltransferase, found in Escherichia coli (strain SMS-3-5 / SECEC).